Reading from the N-terminus, the 37-residue chain is ATP synthase subunit O, mitochondrial (37 aa).

Belongs to the ATPase delta chain family. F-type ATPases have 2 components, CF(1) - the catalytic core - and CF(0) - the membrane proton channel. CF(1) has five subunits: alpha(3), beta(3), gamma(1), delta(1), epsilon(1). CF(0) has three main subunits: a, b and c.

The protein resides in the mitochondrion. It is found in the mitochondrion inner membrane. In terms of biological role, mitochondrial membrane ATP synthase (F(1)F(0) ATP synthase or Complex V) produces ATP from ADP in the presence of a proton gradient across the membrane which is generated by electron transport complexes of the respiratory chain. F-type ATPases consist of two structural domains, F(1) - containing the extramembraneous catalytic core and F(0) - containing the membrane proton channel, linked together by a central stalk and a peripheral stalk. During catalysis, ATP synthesis in the catalytic domain of F(1) is coupled via a rotary mechanism of the central stalk subunits to proton translocation. Part of the complex F(0) domain and the peripheric stalk, which acts as a stator to hold the catalytic alpha(3)beta(3) subcomplex and subunit a/ATP6 static relative to the rotary elements. This is ATP synthase subunit O, mitochondrial from Solanum tuberosum (Potato).